We begin with the raw amino-acid sequence, 340 residues long: Cytosolic Fe-S cluster assembly factor NBP35 (340 aa).

Positions 1-41 (MPSLVDPVANKTDEGNNRTDLKAPEPEHCPGTESEEAGKAD) are disordered. Over residues 11 to 30 (KTDEGNNRTDLKAPEPEHCP) the composition is skewed to basic and acidic residues. Cys29, Cys43, Cys46, and Cys52 together coordinate [4Fe-4S] cluster. 82–89 (GKGGVGKS) provides a ligand contact to ATP. Cys255 and Cys258 together coordinate [4Fe-4S] cluster.

Belongs to the Mrp/NBP35 ATP-binding proteins family. NUBP1/NBP35 subfamily. Heterotetramer of 2 NBP35 and 2 CFD1 chains. [4Fe-4S] cluster serves as cofactor.

Its subcellular location is the cytoplasm. The protein localises to the nucleus. Its function is as follows. Component of the cytosolic iron-sulfur (Fe/S) protein assembly (CIA) machinery. Required for maturation of extramitochondrial Fe-S proteins. The NBP35-CFD1 heterotetramer forms a Fe-S scaffold complex, mediating the de novo assembly of an Fe-S cluster and its transfer to target apoproteins. Required for biogenesis and export of both ribosomal subunits, which may reflect a role in assembly of the Fe/S clusters in RLI1, a protein which performs rRNA processing and ribosome export. The chain is Cytosolic Fe-S cluster assembly factor NBP35 from Yarrowia lipolytica (strain CLIB 122 / E 150) (Yeast).